Consider the following 316-residue polypeptide: Dehydrogenase/reductase SDR family protein 7-like (316 aa).

Topologically, residues Met1 to Arg18 are cytoplasmic. The chain crosses the membrane as a helical; Signal-anchor for type II membrane protein span at residues Leu19 to Ala39. At Pro40–Lys316 the chain is on the peroxisomal side. Ile56 to Thr80 provides a ligand contact to NAD(+). A substrate-binding site is contributed by Ser194. Tyr207 functions as the Proton acceptor in the catalytic mechanism.

The protein belongs to the short-chain dehydrogenases/reductases (SDR) family.

It localises to the peroxisome membrane. Its function is as follows. Putative oxidoreductase. The chain is Dehydrogenase/reductase SDR family protein 7-like from Dictyostelium discoideum (Social amoeba).